Consider the following 177-residue polypeptide: Large ribosomal subunit protein uL6 (177 aa).

This sequence belongs to the universal ribosomal protein uL6 family. In terms of assembly, part of the 50S ribosomal subunit.

This protein binds to the 23S rRNA, and is important in its secondary structure. It is located near the subunit interface in the base of the L7/L12 stalk, and near the tRNA binding site of the peptidyltransferase center. This chain is Large ribosomal subunit protein uL6, found in Klebsiella pneumoniae subsp. pneumoniae (strain ATCC 700721 / MGH 78578).